Consider the following 492-residue polypeptide: GTPase-activating protein MSB4 (492 aa).

Positions 147 to 367 (GIPAEWRGNA…RIWDCLFYEE (221 aa)) constitute a Rab-GAP TBC domain.

It is found in the cytoplasm. The protein localises to the bud. The protein resides in the bud neck. Its function is as follows. Regulates exocytosis by functioning as a GAP for SEC4. Also required for efficient polarization of the actin patches. In Saccharomyces cerevisiae (strain ATCC 204508 / S288c) (Baker's yeast), this protein is GTPase-activating protein MSB4 (MSB4).